We begin with the raw amino-acid sequence, 304 residues long: MSWIERILNKSNITQTRKASIPEGVWTKCDSCGQVLYRAELERNLEVCPKCDHHMRMSARARLHMLLDAGSEVELGSELEPKDILKFRDSKKYKDRISAAQKDTGEKDALVAMKGTLQGMPIVAASFEFAFMGGSMASVVGARFVRAVEQALEDNCPLVCFSSSGGARMQEALMSLMQMAKTSAALAKMQERGLPYISVLTDPTMGGVSASLAMLGDINIAEPKALIGFAGPRVIEQTVREKLPPGFQRSEFLIEKGAIDIIVRRPVMRQTLASILSKLTHQPQPSVVESKADTVAQPENQADV.

In terms of domain architecture, CoA carboxyltransferase N-terminal spans 25–294 (VWTKCDSCGQ…PSVVESKADT (270 aa)). Zn(2+) contacts are provided by Cys29, Cys32, Cys48, and Cys51. A C4-type zinc finger spans residues 29–51 (CDSCGQVLYRAELERNLEVCPKC).

It belongs to the AccD/PCCB family. In terms of assembly, acetyl-CoA carboxylase is a heterohexamer composed of biotin carboxyl carrier protein (AccB), biotin carboxylase (AccC) and two subunits each of ACCase subunit alpha (AccA) and ACCase subunit beta (AccD). It depends on Zn(2+) as a cofactor.

It localises to the cytoplasm. It catalyses the reaction N(6)-carboxybiotinyl-L-lysyl-[protein] + acetyl-CoA = N(6)-biotinyl-L-lysyl-[protein] + malonyl-CoA. Its pathway is lipid metabolism; malonyl-CoA biosynthesis; malonyl-CoA from acetyl-CoA: step 1/1. In terms of biological role, component of the acetyl coenzyme A carboxylase (ACC) complex. Biotin carboxylase (BC) catalyzes the carboxylation of biotin on its carrier protein (BCCP) and then the CO(2) group is transferred by the transcarboxylase to acetyl-CoA to form malonyl-CoA. This is Acetyl-coenzyme A carboxylase carboxyl transferase subunit beta from Yersinia pestis bv. Antiqua (strain Nepal516).